The sequence spans 279 residues: Undecaprenyl-diphosphatase (279 aa).

8 helical membrane-spanning segments follow: residues Leu-2–Leu-22, Ala-44–Ile-64, Trp-85–Leu-105, Phe-113–Ile-133, Val-163–Leu-183, Thr-188–Leu-208, Ala-223–Ile-243, and Phe-255–Phe-275.

Belongs to the UppP family.

The protein localises to the cell membrane. It carries out the reaction di-trans,octa-cis-undecaprenyl diphosphate + H2O = di-trans,octa-cis-undecaprenyl phosphate + phosphate + H(+). In terms of biological role, catalyzes the dephosphorylation of undecaprenyl diphosphate (UPP). Confers resistance to bacitracin. In Streptococcus pyogenes serotype M2 (strain MGAS10270), this protein is Undecaprenyl-diphosphatase.